The following is a 474-amino-acid chain: tRNA-2-methylthio-N(6)-dimethylallyladenosine synthase (474 aa).

Positions 3 to 120 (KKLHIKTWGC…LPEMIDQIRD (118 aa)) constitute an MTTase N-terminal domain. Residues C12, C49, C83, C157, C161, and C164 each contribute to the [4Fe-4S] cluster site. The Radical SAM core domain maps to 143–375 (RADGPSAFVS…QDRITQQAMR (233 aa)). Positions 378–441 (RQMLGTVQRI…TNSLRGTFVR (64 aa)) constitute a TRAM domain.

The protein belongs to the methylthiotransferase family. MiaB subfamily. As to quaternary structure, monomer. [4Fe-4S] cluster serves as cofactor.

Its subcellular location is the cytoplasm. The catalysed reaction is N(6)-dimethylallyladenosine(37) in tRNA + (sulfur carrier)-SH + AH2 + 2 S-adenosyl-L-methionine = 2-methylsulfanyl-N(6)-dimethylallyladenosine(37) in tRNA + (sulfur carrier)-H + 5'-deoxyadenosine + L-methionine + A + S-adenosyl-L-homocysteine + 2 H(+). Its function is as follows. Catalyzes the methylthiolation of N6-(dimethylallyl)adenosine (i(6)A), leading to the formation of 2-methylthio-N6-(dimethylallyl)adenosine (ms(2)i(6)A) at position 37 in tRNAs that read codons beginning with uridine. This is tRNA-2-methylthio-N(6)-dimethylallyladenosine synthase from Shewanella sediminis (strain HAW-EB3).